We begin with the raw amino-acid sequence, 450 residues long: Signal recognition particle protein (450 aa).

Residues 107 to 114, 190 to 194, and 248 to 251 contribute to the GTP site; these read GLQGVGKT, DTAGR, and TKTD.

It belongs to the GTP-binding SRP family. SRP54 subfamily. In terms of assembly, part of the signal recognition particle protein translocation system, which is composed of SRP and FtsY. SRP is a ribonucleoprotein composed of Ffh and a 4.5S RNA molecule.

The protein resides in the cytoplasm. It catalyses the reaction GTP + H2O = GDP + phosphate + H(+). In terms of biological role, involved in targeting and insertion of nascent membrane proteins into the cytoplasmic membrane. Binds to the hydrophobic signal sequence of the ribosome-nascent chain (RNC) as it emerges from the ribosomes. The SRP-RNC complex is then targeted to the cytoplasmic membrane where it interacts with the SRP receptor FtsY. Interaction with FtsY leads to the transfer of the RNC complex to the Sec translocase for insertion into the membrane, the hydrolysis of GTP by both Ffh and FtsY, and the dissociation of the SRP-FtsY complex into the individual components. This Buchnera aphidicola subsp. Schizaphis graminum (strain Sg) protein is Signal recognition particle protein.